We begin with the raw amino-acid sequence, 107 residues long: Probable monothiol glutaredoxin 2 (107 aa).

The Glutaredoxin domain maps to 7–107; sequence LEFIQNAIKK…LEKMLKDVVV (101 aa). Position 24 (Lys24) interacts with glutathione. A [2Fe-2S] cluster-binding site is contributed by Cys32. Glutathione-binding positions include Arg61, Phe73, and 86–87; that span reads CD.

This sequence belongs to the glutaredoxin family. Monothiol subfamily.

The protein is Probable monothiol glutaredoxin 2 (grxC2) of Rickettsia prowazekii (strain Madrid E).